We begin with the raw amino-acid sequence, 140 residues long: Putative pre-16S rRNA nuclease (140 aa).

The protein belongs to the YqgF nuclease family.

Its subcellular location is the cytoplasm. Functionally, could be a nuclease involved in processing of the 5'-end of pre-16S rRNA. In Enterococcus faecalis (strain ATCC 700802 / V583), this protein is Putative pre-16S rRNA nuclease.